The following is a 285-amino-acid chain: Sulfur carrier protein TtuD (285 aa).

Rhodanese domains lie at 20 to 127 (EDPK…PLTT) and 161 to 281 (KEGK…VPIA). The residue at position 240 (cysteine 240) is a Cysteine persulfide.

In terms of processing, cys-240 can accept a sulfur atom as persulfide forms from cysteine desulfurases IscS and SufS.

Its pathway is tRNA modification. Its function is as follows. Required for the efficient 2-thiolation of 5-methyluridine residue at position 54 in the T loop of tRNAs, leading to 5-methyl-2-thiouridine (m(5)s(2)U or s(2)T). TtuD is a sulfur carrier protein that has a role to direct sulfur flow from cysteine desulfurases to m(5)s(2)U synthesis in vivo. It enhances the cysteine desulfurase activity of IscS and SufS, as well as the formation of thiocarboxylated TtuB (TtuB-COSH) in the presence of these desulfurases. The chain is Sulfur carrier protein TtuD from Thermus thermophilus (strain ATCC BAA-163 / DSM 7039 / HB27).